The primary structure comprises 164 residues: UPF0262 protein Xaut_1232 (164 aa).

Belongs to the UPF0262 family.

The protein is UPF0262 protein Xaut_1232 of Xanthobacter autotrophicus (strain ATCC BAA-1158 / Py2).